Consider the following 106-residue polypeptide: Movement protein TGB2 (106 aa).

Topologically, residues methionine 1–histidine 9 are cytoplasmic. The chain crosses the membrane as a helical span at residues threonine 10 to serine 30. Residues arginine 31–glycine 71 lie on the Lumenal side of the membrane. The chain crosses the membrane as a helical span at residues phenylalanine 72–leucine 92. The Cytoplasmic portion of the chain corresponds to serine 93–histidine 106.

Belongs to the Tymovirales TGBp2 protein family.

It is found in the host endoplasmic reticulum membrane. Functionally, plays a role in viral cell-to-cell propagation, by facilitating genome transport to neighboring plant cells through plasmosdesmata,. This is Movement protein TGB2 from Chrysanthemum morifolium (Florist's daisy).